The sequence spans 494 residues: 4-trimethylaminobutyraldehyde dehydrogenase (494 aa).

Residue Ser2 is modified to N-acetylserine. Lys30 is modified (N6-acetyllysine; alternate). Lys30 carries the post-translational modification N6-succinyllysine; alternate. An N6-succinyllysine modification is found at Lys59. Residues Lys180 and Gly232–Thr236 each bind NAD(+). The active-site Proton acceptor is Glu254. Cys288 acts as the Nucleophile in catalysis. N6-acetyllysine is present on Lys298. N6-acetyllysine; alternate is present on Lys303. Lys303 carries the post-translational modification N6-succinyllysine; alternate. Lys344 bears the N6-acetyllysine mark. Glu391 is an NAD(+) binding site.

It belongs to the aldehyde dehydrogenase family. As to quaternary structure, homotetramer.

It is found in the cytoplasm. The protein resides in the cytosol. The enzyme catalyses 4-(trimethylamino)butanal + NAD(+) + H2O = 4-(trimethylamino)butanoate + NADH + 2 H(+). The catalysed reaction is an aldehyde + NAD(+) + H2O = a carboxylate + NADH + 2 H(+). It carries out the reaction 4-aminobutanal + NAD(+) + H2O = 4-aminobutanoate + NADH + 2 H(+). It catalyses the reaction formaldehyde + NAD(+) + H2O = formate + NADH + 2 H(+). The enzyme catalyses acetaldehyde + NAD(+) + H2O = acetate + NADH + 2 H(+). The catalysed reaction is imidazole-4-acetaldehyde + NAD(+) + H2O = imidazole-4-acetate + NADH + 2 H(+). It carries out the reaction acrolein + NAD(+) + H2O = acrylate + NADH + 2 H(+). It catalyses the reaction (5-hydroxyindol-3-yl)acetaldehyde + NAD(+) + H2O = (5-hydroxyindol-3-yl)acetate + NADH + 2 H(+). The enzyme catalyses 3,4-dihydroxyphenylacetaldehyde + NAD(+) + H2O = 3,4-dihydroxyphenylacetate + NADH + 2 H(+). The catalysed reaction is spermine monoaldehyde + NAD(+) + H2O = N-(2-carboxyethyl)spermidine + NADH + 2 H(+). It carries out the reaction propanal + NAD(+) + H2O = propanoate + NADH + 2 H(+). It catalyses the reaction butanal + NAD(+) + H2O = butanoate + NADH + 2 H(+). The enzyme catalyses pentanal + NAD(+) + H2O = pentanoate + NADH + 2 H(+). The catalysed reaction is hexanal + NAD(+) + H2O = hexanoate + NADH + 2 H(+). It participates in amine and polyamine biosynthesis; carnitine biosynthesis. Converts gamma-trimethylaminobutyraldehyde into gamma-butyrobetaine with high efficiency (in vitro). Can catalyze the irreversible oxidation of a broad range of aldehydes to the corresponding acids in an NAD-dependent reaction, but with low efficiency. Catalyzes the oxidation of aldehydes arising from biogenic amines and polyamines. In Mus musculus (Mouse), this protein is 4-trimethylaminobutyraldehyde dehydrogenase.